The primary structure comprises 836 residues: ATP-binding cassette sub-family B member 6 (836 aa).

Over 1–26 (MVTVGNYCEAEGPAGPAWTQNGLSPC) the chain is Lumenal. Residues 1-205 (MVTVGNYCEA…SGGLFILGLW (205 aa)) form a required for the lysosomal targeting region. Residues 1–236 (MVTVGNYCEA…RNQGRSTDPR (236 aa)) are required for ATPase activity. Cys8 and Cys26 are oxidised to a cystine. The helical transmembrane segment at 27-47 (FFYTLVPSTLMTLGVLALVLV) threads the bilayer. Topologically, residues 48–72 (LPCRRREVPAGTEELSWAAGPRVAP) are cytoplasmic. The chain crosses the membrane as a helical span at residues 73–93 (YALQLSLAILQMALPLASLAG). Residues 94–106 (RVGTARGVRLPGY) are Lumenal-facing. A helical membrane pass occupies residues 107-127 (LLLASVLESLASACGLWLLVV). The Cytoplasmic portion of the chain corresponds to 128-147 (ERSQARQSLAMGVWMKFRHS). The chain crosses the membrane as a helical span at residues 148–168 (LGLLLLWTVTFAAENLVLVSW). Residues 169 to 185 (NSPQWWWSRADLGQQVQ) are Lumenal-facing. Residues 186–206 (FGLWVLRYMTSGGLFILGLWA) traverse the membrane as a helical segment. Residues 207–264 (PGLRPQSYTLHVNEEDQDGGRNQGRSTDPRSTWRDLGRKLRLLSGYLWPRGSPSLQLT) are Cytoplasmic-facing. Residues 265–285 (VLLCMGLMGLDRALNVLVPIF) form a helical membrane-spanning segment. The 292-residue stretch at 265 to 556 (VLLCMGLMGL…FGTYYRMIQT (292 aa)) folds into the ABC transmembrane type-1 domain. The Lumenal segment spans residues 286–305 (YRDIVNLLTSKAPWSSLAWT). Residues 306–326 (VTTYVFLKFLQGGGTGSTGFV) traverse the membrane as a helical segment. Topologically, residues 327-375 (SNLRTFLWIRVQQFTSRGVELRLFSHLHELSLRWHLGRRTGEVLRIVDR) are cytoplasmic. The helical transmembrane segment at 376-396 (GTSSVTGLLSYLVFNIIPTLA) threads the bilayer. A topological domain (lumenal) is located at residue Asp397. Residues 398–418 (IIIGIIYFSMFFNAWFGLIVF) form a helical membrane-spanning segment. The Cytoplasmic portion of the chain corresponds to 419-499 (LCMSLYLILT…STASLVLLNQ (81 aa)). Residues 500–520 (TQNMVIGFGLLAGSLLCAYFV) form a helical membrane-spanning segment. Residues 521–529 (SERRLQVGD) are Lumenal-facing. The chain crosses the membrane as a helical span at residues 530-550 (FVLFGTYITQLYMPLNWFGTY). Over 551–836 (YRMIQTNFID…QGQETVPEDS (286 aa)) the chain is Cytoplasmic. An ABC transporter domain is found at 590-824 (VEFENVHFSY…GGVYAEMWQL (235 aa)). Residues Tyr599 and 623–634 (GPSGAGKSTILR) each bind ATP.

It belongs to the ABC transporter superfamily. ABCB family. Heavy Metal importer (TC 3.A.1.210) subfamily. As to quaternary structure, homodimer. Post-translationally, N-glycosylated. Ubiquitously expressed. Highly expressed in testis by meiotic pachytene spermatocytes and post-meiotic early spermatids.

The protein localises to the cell membrane. It is found in the mitochondrion outer membrane. The protein resides in the endoplasmic reticulum membrane. It localises to the golgi apparatus membrane. Its subcellular location is the endosome membrane. The protein localises to the lysosome membrane. It is found in the late endosome membrane. The protein resides in the early endosome membrane. It localises to the secreted. Its subcellular location is the extracellular exosome. The protein localises to the mitochondrion. It is found in the endosome. The protein resides in the multivesicular body membrane. It localises to the melanosome membrane. The enzyme catalyses heme b(in) + ATP + H2O = heme b(out) + ADP + phosphate + H(+). The catalysed reaction is coproporphyrin III(in) + ATP + H2O = coproporphyrin III(out) + ADP + phosphate + H(+). It carries out the reaction pheophorbide a(in) + ATP + H2O = pheophorbide a(out) + ADP + phosphate + H(+). It catalyses the reaction coproporphyrinogen III(in) + ATP + H2O = coproporphyrinogen III(out) + ADP + phosphate + H(+). The enzyme catalyses protoporphyrin IX(in) + ATP + H2O = protoporphyrin IX(out) + ADP + phosphate + H(+). The catalysed reaction is coproporphyrin I(in) + ATP + H2O = coproporphyrin I(out) + ADP + phosphate + H(+). It carries out the reaction uroporphyrin I(in) + ATP + H2O = uroporphyrin I(out) + ADP + phosphate + H(+). It catalyses the reaction uroporphyrin III(in) + ATP + H2O = uroporphyrin III(out) + ADP + phosphate + H(+). ATP-dependent transporter that catalyzes the transport of a broad-spectrum of porphyrins from the cytoplasm to the extracellular space through the plasma membrane or into the vesicle lumen. May also function as an ATP-dependent importer of porphyrins from the cytoplasm into the mitochondria, in turn may participate in the de novo heme biosynthesis regulation and in the coordination of heme and iron homeostasis during phenylhydrazine stress. May play a key role in the early steps of melanogenesis producing PMEL amyloid fibrils. In vitro, it confers to cells a resistance to toxic metal such as arsenic and cadmium and against chemotherapeutics agent such as 5-fluorouracil, SN-38 and vincristin. In addition may play a role in the transition metal homeostasis. This is ATP-binding cassette sub-family B member 6 from Rattus norvegicus (Rat).